We begin with the raw amino-acid sequence, 51 residues long: Large ribosomal subunit protein eL39z (51 aa).

This sequence belongs to the eukaryotic ribosomal protein eL39 family.

The chain is Large ribosomal subunit protein eL39z (RPL39A) from Oryza sativa subsp. japonica (Rice).